Consider the following 172-residue polypeptide: Protein-export protein SecB (172 aa).

Belongs to the SecB family. Homotetramer, a dimer of dimers. One homotetramer interacts with 1 SecA dimer.

The protein resides in the cytoplasm. Functionally, one of the proteins required for the normal export of preproteins out of the cell cytoplasm. It is a molecular chaperone that binds to a subset of precursor proteins, maintaining them in a translocation-competent state. It also specifically binds to its receptor SecA. The polypeptide is Protein-export protein SecB (Haemophilus ducreyi (strain 35000HP / ATCC 700724)).